Consider the following 175-residue polypeptide: Alpha-crystallin B chain (175 aa).

N-acetylmethionine is present on methionine 1. Phosphoserine occurs at positions 19, 45, and 59. The 109-residue stretch at 56-164 folds into the sHSP domain; the sequence is RAPSWIDTGL…PERTIPITRE (109 aa). Histidine 83 is a binding site for Zn(2+). The residue at position 92 (lysine 92) is an N6-acetyllysine. 4 residues coordinate Zn(2+): histidine 104, glutamate 106, histidine 111, and histidine 119. The interval 145 to 175 is disordered; sequence VNGPRKQASGPERTIPITREEKPAVTAAPKK. Lysine 166 is modified (N6-acetyllysine). A glycan (O-linked (GlcNAc) threonine) is linked at threonine 170.

This sequence belongs to the small heat shock protein (HSP20) family. In terms of assembly, heteromer composed of three CRYAA and one CRYAB subunits. Aggregates with homologous proteins, including the small heat shock protein HSPB1, to form large heteromeric complexes. Inter-subunit bridging via zinc ions enhances stability, which is crucial as there is no protein turn over in the lens. Interacts with HSPBAP1 and TTN/titin. Interacts with TMEM109; in the cellular response to DNA damage. Interacts with DES; binds rapidly during early stages of DES filament assembly and a reduced binding seen in the later stages. Interacts with TMED10; the interaction mediates the translocation from the cytoplasm into the ERGIC (endoplasmic reticulum-Golgi intermediate compartment) and thereby secretion. Interacts with ATP6V1A and with MTOR, forming a ternary complex. Lens as well as other tissues.

It localises to the cytoplasm. The protein resides in the nucleus. Its subcellular location is the secreted. It is found in the lysosome. Its function is as follows. May contribute to the transparency and refractive index of the lens. Has chaperone-like activity, preventing aggregation of various proteins under a wide range of stress conditions. In lens epithelial cells, stabilizes the ATP6V1A protein, preventing its degradation by the proteasome. The protein is Alpha-crystallin B chain (CRYAB) of Mesocricetus auratus (Golden hamster).